The chain runs to 275 residues: tRNA pseudouridine synthase B (275 aa).

The active-site Nucleophile is the aspartate 38.

Belongs to the pseudouridine synthase TruB family. Type 1 subfamily.

It catalyses the reaction uridine(55) in tRNA = pseudouridine(55) in tRNA. Responsible for synthesis of pseudouridine from uracil-55 in the psi GC loop of transfer RNAs. The polypeptide is tRNA pseudouridine synthase B (Nitratiruptor sp. (strain SB155-2)).